Consider the following 468-residue polypeptide: Glutamate--tRNA ligase 2 (468 aa).

Residues 13 to 23 (PSPTGYLHIGG) carry the 'HIGH' region motif. Positions 241 to 245 (KLSKR) match the 'KMSKS' region motif. An ATP-binding site is contributed by Lys-244.

It belongs to the class-I aminoacyl-tRNA synthetase family. Glutamate--tRNA ligase type 1 subfamily. As to quaternary structure, monomer.

It localises to the cytoplasm. It catalyses the reaction tRNA(Glu) + L-glutamate + ATP = L-glutamyl-tRNA(Glu) + AMP + diphosphate. Functionally, catalyzes the attachment of glutamate to tRNA(Glu) in a two-step reaction: glutamate is first activated by ATP to form Glu-AMP and then transferred to the acceptor end of tRNA(Glu). This chain is Glutamate--tRNA ligase 2, found in Paracoccus denitrificans (strain Pd 1222).